A 209-amino-acid chain; its full sequence is Octanoyltransferase (209 aa).

Residues 30–209 (GEAPEAVYLV…LEVEFIKIFK (180 aa)) form the BPL/LPL catalytic domain. Substrate-binding positions include 69–76 (RGGKFTFH), 143–145 (AIG), and 156–158 (GIA). The Acyl-thioester intermediate role is filled by Cys174.

This sequence belongs to the LipB family.

It is found in the cytoplasm. It carries out the reaction octanoyl-[ACP] + L-lysyl-[protein] = N(6)-octanoyl-L-lysyl-[protein] + holo-[ACP] + H(+). The protein operates within protein modification; protein lipoylation via endogenous pathway; protein N(6)-(lipoyl)lysine from octanoyl-[acyl-carrier-protein]: step 1/2. In terms of biological role, catalyzes the transfer of endogenously produced octanoic acid from octanoyl-acyl-carrier-protein onto the lipoyl domains of lipoate-dependent enzymes. Lipoyl-ACP can also act as a substrate although octanoyl-ACP is likely to be the physiological substrate. In Rickettsia bellii (strain OSU 85-389), this protein is Octanoyltransferase.